The primary structure comprises 37 residues: Cytochrome b6-f complex subunit 5 (37 aa).

The chain crosses the membrane as a helical span at residues F5–A25.

This sequence belongs to the PetG family. As to quaternary structure, the 4 large subunits of the cytochrome b6-f complex are cytochrome b6, subunit IV (17 kDa polypeptide, PetD), cytochrome f and the Rieske protein, while the 4 small subunits are PetG, PetL, PetM and PetN. The complex functions as a dimer.

It is found in the plastid. It localises to the chloroplast thylakoid membrane. Its function is as follows. Component of the cytochrome b6-f complex, which mediates electron transfer between photosystem II (PSII) and photosystem I (PSI), cyclic electron flow around PSI, and state transitions. PetG is required for either the stability or assembly of the cytochrome b6-f complex. The protein is Cytochrome b6-f complex subunit 5 of Daucus carota (Wild carrot).